The chain runs to 89 residues: Large ribosomal subunit protein eL34 (89 aa).

The protein belongs to the eukaryotic ribosomal protein eL34 family.

This chain is Large ribosomal subunit protein eL34, found in Methanococcus maripaludis (strain C6 / ATCC BAA-1332).